A 324-amino-acid polypeptide reads, in one-letter code: 2,3,4,5-tetrahydropyridine-2,6-dicarboxylate N-succinyltransferase (324 aa).

Mg(2+) is bound by residues Asp173 and Glu190. The Acyl-anhydride intermediate role is filled by Glu206. Residues Arg208, Gly223, Ser226, Ala249, 264–265 (EA), Gly272, Lys284, and 297–300 (RRNS) each bind succinyl-CoA.

Belongs to the type 2 tetrahydrodipicolinate N-succinyltransferase family. Homotrimer.

The protein resides in the cytoplasm. The enzyme catalyses (S)-2,3,4,5-tetrahydrodipicolinate + succinyl-CoA + H2O = (S)-2-succinylamino-6-oxoheptanedioate + CoA. Its pathway is amino-acid biosynthesis; L-lysine biosynthesis via DAP pathway; LL-2,6-diaminopimelate from (S)-tetrahydrodipicolinate (succinylase route): step 1/3. Functionally, catalyzes the conversion of the cyclic tetrahydrodipicolinate (THDP) into the acyclic N-succinyl-L-2-amino-6-oxopimelate using succinyl-CoA. This is 2,3,4,5-tetrahydropyridine-2,6-dicarboxylate N-succinyltransferase from Geodermatophilus obscurus (strain ATCC 25078 / DSM 43160 / JCM 3152 / CCUG 61914 / KCC A-0152 / KCTC 9177 / NBRC 13315 / NRRL B-3577 / G-20).